The sequence spans 196 residues: Crossover junction endodeoxyribonuclease RuvC (196 aa).

Residues Asp19, Glu80, and Asp153 contribute to the active site. Mg(2+) is bound by residues Asp19, Glu80, and Asp153.

Belongs to the RuvC family. Homodimer which binds Holliday junction (HJ) DNA. The HJ becomes 2-fold symmetrical on binding to RuvC with unstacked arms; it has a different conformation from HJ DNA in complex with RuvA. In the full resolvosome a probable DNA-RuvA(4)-RuvB(12)-RuvC(2) complex forms which resolves the HJ. It depends on Mg(2+) as a cofactor.

The protein localises to the cytoplasm. It catalyses the reaction Endonucleolytic cleavage at a junction such as a reciprocal single-stranded crossover between two homologous DNA duplexes (Holliday junction).. Its function is as follows. The RuvA-RuvB-RuvC complex processes Holliday junction (HJ) DNA during genetic recombination and DNA repair. Endonuclease that resolves HJ intermediates. Cleaves cruciform DNA by making single-stranded nicks across the HJ at symmetrical positions within the homologous arms, yielding a 5'-phosphate and a 3'-hydroxyl group; requires a central core of homology in the junction. The consensus cleavage sequence is 5'-(A/T)TT(C/G)-3'. Cleavage occurs on the 3'-side of the TT dinucleotide at the point of strand exchange. HJ branch migration catalyzed by RuvA-RuvB allows RuvC to scan DNA until it finds its consensus sequence, where it cleaves and resolves the cruciform DNA. This chain is Crossover junction endodeoxyribonuclease RuvC, found in Cutibacterium acnes (strain DSM 16379 / KPA171202) (Propionibacterium acnes).